The chain runs to 162 residues: MGLETEKADVQLFMDDDAYSRHSGVDYADPEKFGGSGPDRDPHRLNSHLQLGFEDVVAEPVSTHSFDKVWICSHALFEISKYVVYKFLTVFLAIPLAFAAGILFATLSCLHIWIIMPFVKTCLMVLPSVQTVWKTVTDVVIAPLCASVGRSFSSVSLQLSHD.

Residues 1–86 (MGLETEKADV…FEISKYVVYK (86 aa)) lie on the Cytoplasmic side of the membrane. Tyr-19 carries the post-translational modification Phosphotyrosine; by SRC. Phosphoserine is present on residues Ser-20 and Ser-23. Tyr-27 bears the Phosphotyrosine; by SRC mark. Position 36 is a phosphoserine (Ser-36). Positions 87 to 107 (FLTVFLAIPLAFAAGILFATL) form an intramembrane region, helical. Topologically, residues 108 to 162 (SCLHIWIIMPFVKTCLMVLPSVQTVWKTVTDVVIAPLCASVGRSFSSVSLQLSHD) are cytoplasmic.

Belongs to the caveolin family. In terms of assembly, monomer or homodimer. Interacts with CAV1; the interaction forms a stable heterooligomeric complex that is required for targeting to lipid rafts and for caveolae formation. Tyrosine phosphorylated forms do not form heterooligomers with the Tyr-19-phosphorylated form existing as a monomer or dimer, and the Tyr-27-form as a monomer only. Interacts (tyrosine phosphorylated form) with the SH2 domain-containing proteins, RASA1, NCK1 and SRC. Interacts (tyrosine phosphorylated form) with INSR, the interaction (Tyr-27-phosphorylated form) is increased on insulin stimulation. Interacts (Tyr-19 phosphorylated form) with MAPK1 (phosphorylated form); the interaction, promoted by insulin, leads to nuclear location and MAPK1 activation. Interacts with STAT3; the interaction is increased on insulin-induced tyrosine phosphorylation leading to STAT activation. Post-translationally, phosphorylated on serine and tyrosine residues. CAV1 promotes phosphorylation on Ser-23 which then targets the complex to the plasma membrane, lipid rafts and caveolae. Phosphorylation on Ser-36 appears to modulate mitosis in endothelial cells. Phosphorylation on both Tyr-19 and Tyr-27 is required for insulin-induced 'Ser-727' phosphorylation of STAT3 and its activation. Phosphorylation on Tyr-19 is required for insulin-induced phosphorylation of MAPK1 and DNA binding of STAT3. Tyrosine phosphorylation is induced by both EGF and insulin (By. similarity).

It is found in the nucleus. The protein resides in the cytoplasm. Its subcellular location is the golgi apparatus membrane. The protein localises to the cell membrane. It localises to the membrane. It is found in the caveola. In terms of biological role, may act as a scaffolding protein within caveolar membranes. Interacts directly with G-protein alpha subunits and can functionally regulate their activity. Acts as an accessory protein in conjunction with CAV1 in targeting to lipid rafts and driving caveolae formation. The Ser-36 phosphorylated form has a role in modulating mitosis in endothelial cells. Positive regulator of cellular mitogenesis of the MAPK signaling pathway. Required for the insulin-stimulated nuclear translocation and activation of MAPK1 and STAT3, and the subsequent regulation of cell cycle progression. This chain is Caveolin-2 (CAV2), found in Loxodonta africana (African elephant).